Here is a 507-residue protein sequence, read N- to C-terminus: Methionine--tRNA ligase (507 aa).

The 'HIGH' region signature appears at 12-22; that stretch reads YYVNDVSHIGH. The 'KMSKS' region signature appears at 295–299; sequence KISKS. Lysine 298 lines the ATP pocket.

The protein belongs to the class-I aminoacyl-tRNA synthetase family. MetG type 2B subfamily. In terms of assembly, monomer.

It is found in the cytoplasm. It carries out the reaction tRNA(Met) + L-methionine + ATP = L-methionyl-tRNA(Met) + AMP + diphosphate. Its function is as follows. Is required not only for elongation of protein synthesis but also for the initiation of all mRNA translation through initiator tRNA(fMet) aminoacylation. The protein is Methionine--tRNA ligase of Rickettsia typhi (strain ATCC VR-144 / Wilmington).